The sequence spans 668 residues: DNA ligase (668 aa).

Residues 32 to 36, 81 to 82, and Glu111 contribute to the NAD(+) site; these read DVEYD and SL. Lys113 (N6-AMP-lysine intermediate) is an active-site residue. Positions 134, 171, 290, and 314 each coordinate NAD(+). 4 residues coordinate Zn(2+): Cys408, Cys411, Cys426, and Cys432. One can recognise a BRCT domain in the interval 591-668; sequence EEDLSLKGQT…DEEALIAILS (78 aa).

It belongs to the NAD-dependent DNA ligase family. LigA subfamily. It depends on Mg(2+) as a cofactor. Mn(2+) is required as a cofactor.

It carries out the reaction NAD(+) + (deoxyribonucleotide)n-3'-hydroxyl + 5'-phospho-(deoxyribonucleotide)m = (deoxyribonucleotide)n+m + AMP + beta-nicotinamide D-nucleotide.. Its function is as follows. DNA ligase that catalyzes the formation of phosphodiester linkages between 5'-phosphoryl and 3'-hydroxyl groups in double-stranded DNA using NAD as a coenzyme and as the energy source for the reaction. It is essential for DNA replication and repair of damaged DNA. The protein is DNA ligase of Shewanella piezotolerans (strain WP3 / JCM 13877).